The chain runs to 322 residues: tRNA U34 carboxymethyltransferase (322 aa).

Carboxy-S-adenosyl-L-methionine is bound by residues lysine 90, tryptophan 104, lysine 109, glycine 129, 151–153, 180–181, methionine 196, tyrosine 200, and arginine 315; these read DPS and IE.

It belongs to the class I-like SAM-binding methyltransferase superfamily. CmoB family. Homotetramer.

It catalyses the reaction carboxy-S-adenosyl-L-methionine + 5-hydroxyuridine(34) in tRNA = 5-carboxymethoxyuridine(34) in tRNA + S-adenosyl-L-homocysteine + H(+). Catalyzes carboxymethyl transfer from carboxy-S-adenosyl-L-methionine (Cx-SAM) to 5-hydroxyuridine (ho5U) to form 5-carboxymethoxyuridine (cmo5U) at position 34 in tRNAs. The polypeptide is tRNA U34 carboxymethyltransferase (Cellvibrio japonicus (strain Ueda107) (Pseudomonas fluorescens subsp. cellulosa)).